The sequence spans 979 residues: MSFDGLIVENENTKSGYNDGNDLTDLFKQNGTDMSVINSLLGDTNNPGMNESPKILDSSFENSNPQDGPNYEDFDFMGSIHKEFGNNINEMDDMEDVSDDNLPEEEQAVNYTGDKDDEDFGKLLAKEMGEEAAGQVLSGVGFSIPSGLVPPSEPSKTVSSTTEELQNEAQIRESIVKTFFPTFERGVLLNFSELFKPKPVKLAPPKKKTPKVCVPGRLTLEVDTDYAIIFNSKKSLPLKRNVVSPISTHTKKRRRTANTSQRNDGLDLNTVFTTNDWEKNIIYDESDVNKTNQSSFFIDKSLVDIDFAFDENIFDGDTGTSKVVLNLNDPKLLLQPQLPKKEDSQRSFADTHQRNSLAWKFNISNDPAYEMLKQNHQSKVRNTLSQLAIEHAAFAEKLTFPYYKTRLSKRAVRSYHRPTMSFKPNAAIVFSPLIVRKRSKDKHKSERELIPTTKEITMGDTTHAILVEFSEEHPAVLSNAGMASRIVNYYRKKNEQDESRPKLEVGESHVLDVQDRSPFWNFGSVEPGEITPTLYNKMIRAPLFKHEVPPTDFILIRNSSSYGSKYYLKNINHMFVSGQTFPVTDVPGPHSRKVTTASKNRLKMLVFRLIRRSPNGGLFIRQLSKHFSDQNEMQIRQRLKEFMEYKKKGDGPGYWKLKSNEVVPDEAGTRSMVSPETVCLLESMQVGVRQLEDAGYGKTMDEINDDEDEEQPAEQLLAPWITTRNFINATQGKAMLTLFGEGDPTGIGEGYSFIRTSMKGGFKPAGETADDKPEPQTKNAHAYNVAKQQRAYEEEINRIWNAQKRGLSINNLEELAKKYGINSIHDDYVESNEETTREETPSSDKVLRIVRLYRDKNGNLERKQETIHDPIVIHAYLKKRREIDEQSTALDAVVPTGDEAIDRRNRRRLEQELAKSQKNWERRRARHAAKEGINLNGEGRKPTTRKCSNCGQVGHMKTNKICPLFGRPEGGLATMLDKN.

Ser244 carries the phosphoserine modification.

In terms of assembly, TFIID is composed of TATA binding protein (TBP) and a number of TBP-associated factors (TAFs).

The protein localises to the nucleus. Its function is as follows. TAFs are components of the transcription factor IID (TFIID) complex that are essential for mediating regulation of RNA polymerase transcription. This is Putative transcription initiation factor TFIID 111 kDa subunit from Schizosaccharomyces pombe (strain 972 / ATCC 24843) (Fission yeast).